Here is a 414-residue protein sequence, read N- to C-terminus: WW domain-containing oxidoreductase (414 aa).

A disordered region spans residues 1–23 (MAALKYAGLEDTDSEEELPPGWE). Positions 16 to 49 (EELPPGWEERTTKDGWVYYANHLEEKTQWEHPKS) constitute a WW 1 domain. The Nuclear localization signal motif lies at 50-55 (GKRKRV). Positions 57–90 (GGLPYGWEQETDENGQVYFVDHINKRTTYLDPRL) constitute a WW 2 domain. 131–137 (GANSGIG) contributes to the NADP(+) binding site. S260 lines the substrate pocket. The active-site Proton acceptor is Y293.

This sequence belongs to the short-chain dehydrogenases/reductases (SDR) family.

Its subcellular location is the cytoplasm. The protein localises to the mitochondrion. It is found in the golgi apparatus. The protein resides in the lysosome. Putative oxidoreductase. Acts as a tumor suppressor and plays a role in apoptosis. May function synergistically with p53/TP53 to control genotoxic stress-induced cell death. Plays a role in TGFB1 signaling and TGFB1-mediated cell death. May also play a role in tumor necrosis factor (TNF)-mediated cell death. Required for normal bone development. Inhibits Wnt signaling. This is WW domain-containing oxidoreductase (WWOX) from Gallus gallus (Chicken).